Reading from the N-terminus, the 340-residue chain is Ava biosynthesis cluster protein G (340 aa).

4 consecutive transmembrane segments (helical) span residues tryptophan 15–asparagine 35, phenylalanine 81–valine 101, alanine 118–phenylalanine 138, and leucine 148–isoleucine 168. An N-linked (GlcNAc...) asparagine glycan is attached at asparagine 171. 2 consecutive transmembrane segments (helical) span residues phenylalanine 219–phenylalanine 239 and serine 315–isoleucine 335.

The protein resides in the membrane. It participates in secondary metabolite biosynthesis. Part of the cluster that mediates the biosynthesis of a highly modified cyclo-arginine-tryptophan dipeptide (cRW). The first step of the pathway is perfornmed by the arginine-containing cyclodipeptide synthase (RCPDS) avaA that acts as the scaffold-generating enzyme and is responsible for formation of the cyclo-Arg-Trp (cRW) diketopiperazine. AvaB then acts as a multifunctional flavoenzyme that is responsible for generating the cyclo-Arg-formylkynurenine DKP, which can be deformylated by avaC. AvaB then further catalyzes an additional N-oxidation followed by cyclization and dehydration. The next step is an N-acetylation of the guanidine group catalyzed by the arginine N-acetyltransferase avaD. The roles of the additional enzymes identified within the ava cluster still have to be determined. This is Ava biosynthesis cluster protein G from Aspergillus versicolor.